The chain runs to 315 residues: Olfactory receptor 10H2 (315 aa).

Topologically, residues 1–25 (MLGLNHTSMSEFILVGFSAFPHLQL) are extracellular. The N-linked (GlcNAc...) asparagine glycan is linked to asparagine 5. The helical transmembrane segment at 26-46 (MLFLLFLLMYLFTLLGNLLIM) threads the bilayer. The Cytoplasmic segment spans residues 47 to 54 (ATVWSERS). The helical transmembrane segment at 55-75 (LHTPMYLFLCVLSVSEILYTV) threads the bilayer. Residues 76–99 (AIIPRMLADLLSTQRSIAFLACAS) lie on the Extracellular side of the membrane. A disulfide bridge links cysteine 97 with cysteine 189. Residues 100-120 (QMFFSFSFGFTHSFLLTVMGY) traverse the membrane as a helical segment. Residues 121-139 (DRYVAICHPLRYNVLMSPR) lie on the Cytoplasmic side of the membrane. The chain crosses the membrane as a helical span at residues 140 to 160 (GCACLVGCSWAGGSVMGMVVT). Residues 161–197 (SAIFQLTFCGSHEIQHFLCHVPPLLKLACGNNVPAVA) are Extracellular-facing. A helical membrane pass occupies residues 198–218 (LGVGLVCIMALLGCFLLILLS). The Cytoplasmic segment spans residues 219 to 238 (YAFIVADILKIPSAEGRNKA). The chain crosses the membrane as a helical span at residues 239–259 (FSTCASHLIVVIVHYGFASVI). Residues 260–272 (YLKPKGPHSQEGD) are Extracellular-facing. A helical transmembrane segment spans residues 273–293 (TLMATTYAVLTPFLSPIIFSL). Residues 294-315 (RNKELKVAMKRTFLSTLYSSGT) are Cytoplasmic-facing.

This sequence belongs to the G-protein coupled receptor 1 family.

It localises to the cell membrane. Odorant receptor. The polypeptide is Olfactory receptor 10H2 (OR10H2) (Homo sapiens (Human)).